A 4687-amino-acid polypeptide reads, in one-letter code: Plectin (4687 aa).

Positions 1–1473 are globular 1; the sequence is MVAGMLMPLD…SELTTLTSQY (1473 aa). Arg21 carries the post-translational modification Phosphoserine. At Val26 the chain carries Phosphotyrosine. Positions 111–158 are disordered; the sequence is RRRSPHVQTMQGPLGCPPKRGPLPAEDPAREERQVYRRKEREEGAPET. Basic and acidic residues predominate over residues 137-154; it reads DPAREERQVYRRKEREEG. Residues 181–406 form an actin-binding region; sequence DERDRVQKKT…YVSSLYDAMP (226 aa). Calponin-homology (CH) domains lie at 185–288 and 301–406; these read RVQK…LHFK and MTAK…DAMP. The Spectrin 1 repeat unit spans residues 648 to 722; the sequence is LQSTQRRPEL…ERARNDESQL (75 aa). Ser723 carries the phosphoserine modification. Spectrin repeat units follow at residues 743-827 and 840-933; these read KLLN…REDH and LQTQ…AIVQ. Thr818 is modified (phosphothreonine). The region spanning 944-1001 is the SH3 domain; it reads RGHVPLLAVCDYKQVEVTVHKGDQCQLVGPAQPFHWKVLSSSGSEAAVPSVCFLVPPP. Ser1050 bears the Phosphoserine mark. Residues 1318-1418 form a Spectrin 4 repeat; sequence RERVTQLLER…QKFAKQYINA (101 aa). Ser1438 carries the post-translational modification Phosphoserine. 2 coiled-coil regions span residues 1472–1692 and 1724–2760; these read QYIK…ERWL and SFAE…TSQA. Residues 1474–2758 form a central fibrous rod domain region; sequence IKFISETLRR…LAHSEEIATS (1285 aa). A disordered region spans residues 1623 to 1647; that stretch reads EEAEAQKRQAQEEAERLRRQVQDES. At Ser1724 the chain carries Phosphoserine. Lys1728 carries the N6-acetyllysine modification. Disordered regions lie at residues 1741-1764, 1796-1846, 2096-2139, 2164-2188, and 2218-2307; these read VTVT…ERAR, SLAQ…GTAQ, EDTM…AEEE, LRER…KRLQ, and RLRS…DAEM. Composition is skewed to basic and acidic residues over residues 1801 to 1839, 2096 to 2111, and 2119 to 2131; these read DAEK…KQRQ, EDTM…EAAR, and EEQR…ERVQ. Residues 2173-2182 are compositionally biased toward low complexity; it reads ARQLQLAQEA. Residues 2218–2261 are compositionally biased toward basic and acidic residues; that stretch reads RLRSEAEAARRAAEEAEEAREQAEREAAQSRKQVEEAERLKQSA. Positions 2262-2275 are enriched in low complexity; the sequence is EEQAQAQAQAQAAA. A compositionally biased stretch (basic and acidic residues) spans 2276–2291; sequence EKLRKEAEQEAARRAQ. Position 2634 is a phosphoserine (Ser2634). At Lys2639 the chain carries N6-acetyllysine. The interval 2671–2710 is disordered; sequence QEEQQRQQQQMEQEKQELVASMEEARRRQREAEEGVRRKQ. Residues 2682–2710 show a composition bias toward basic and acidic residues; the sequence is EQEKQELVASMEEARRRQREAEEGVRRKQ. A globular 2 region spans residues 2759 to 4687; sequence QAAATKALPN…SLGGPESAVA (1929 aa). The residue at position 2777 (Ser2777) is a Phosphoserine. Tyr2784 carries the phosphotyrosine modification. Plectin repeat units follow at residues 2791 to 2828, 2829 to 2866, 2867 to 2904, 2905 to 2942, 2943 to 2980, and 2984 to 3018; these read QKVP…REDV, RHYL…PGTA, LILL…PELH, HKLL…RDHG, IRLL…EEMN, and ADPS…PETG. At Ser2805 the chain carries Phosphoserine. Thr2889 bears the Phosphothreonine mark. Tyr3036 is modified (phosphotyrosine). N6-acetyllysine is present on residues Lys3056 and Lys3094. Plectin repeat units lie at residues 3119–3156, 3157–3194, 3195–3232, 3233–3270, 3271–3308, and 3311–3346; these read ALVP…ADEV, RQAL…PEVA, VALL…PEMH, EKLL…REQG, LRLL…KETN, and LTSP…QLTG. Tyr3365 carries the post-translational modification Phosphotyrosine. Lys3423 bears the N6-acetyllysine mark. Plectin repeat units lie at residues 3488 to 3525, 3526 to 3563, 3564 to 3601, 3602 to 3639, and 3643 to 3677; these read RTLL…ASTA, TLLL…PELH, EKLL…RDHA, IRLL…EEMN, and ADPS…PETG. A Phosphoserine modification is found at Ser3583. A Phosphothreonine modification is found at Thr3788. Tyr3793 carries the phosphotyrosine modification. Plectin repeat units lie at residues 3823-3860, 3861-3898, 3899-3936, 3937-3974, and 3978-4011; these read WRYL…AEVA, RLLL…PELH, DRLL…AEEA, LRLL…KDTH, and SEPS…DNSG. Thr4033 carries the phosphothreonine modification. Ser4057 carries the phosphoserine modification. Plectin repeat units lie at residues 4066 to 4103, 4104 to 4141, 4142 to 4179, 4180 to 4217, 4221 to 4255, and 4268 to 4308; these read QKFL…PGTA, FELL…PEFK, DKLL…KDHG, IRLL…EEMN, TDPS…PQTG, and RKTS…HQTY. Residues 4253–4303 are binding to intermediate filaments; sequence QTGLCLLPLKEKKRERKTSSKSSVRKRRVVIVDPETGKEMSVYEAYRKGLI. A phosphoserine mark is found at Ser4385, Ser4387, Ser4388, Ser4389, Ser4392, Ser4393, Ser4394, and Ser4395. At Tyr4396 the chain carries Phosphotyrosine. Residues Ser4399 and Ser4409 each carry the phosphoserine modification. Plectin repeat units follow at residues 4411-4448, 4449-4486, 4487-4524, 4525-4562, and 4563-4600; these read SDPT…NITG, QRLL…KIMV, DRIN…YEAG, QRFL…ARTA, and QKLR…EGTG. Position 4414 is a phosphothreonine (Thr4414). Thr4542 bears the Phosphothreonine; by CDK1 mark. 2 positions are modified to phosphoserine: Ser4610 and Ser4616. Over residues 4614–4674 the composition is skewed to low complexity; sequence YYSPYSVSGS…SGYGRRYASG (61 aa). The tract at residues 4614–4687 is disordered; that stretch reads YYSPYSVSGS…SLGGPESAVA (74 aa). Position 4618 is a phosphotyrosine (Tyr4618). Phosphoserine occurs at positions 4619, 4621, and 4625. Thr4626 carries the post-translational modification Phosphothreonine. The 4 X 4 AA tandem repeats of G-S-R-X stretch occupies residues 4628-4643; sequence GSRTGSRTGSRAGSRR. Ser4629 bears the Phosphoserine mark. 2 positions are modified to omega-N-methylarginine: Arg4630 and Arg4643. 2 positions are modified to phosphoserine: Ser4645 and Ser4678.

Belongs to the plakin or cytolinker family. As to quaternary structure, homodimer or homotetramer. Interacts (via actin-binding domain) with SYNE3. Interacts (via calponin-homology (CH) 1 domain) with VIM (via rod region). Interacts (via N-terminus) with DST isoform 2 (via N-terminus). Interacts with FER. Interacts with TOR1A. Interacts with ANK3. Identified in complexes that contain VIM, EZR, AHNAK, BFSP1, BFSP2, ANK2, PLEC, PRX and spectrin. In terms of processing, phosphorylated by CDK1; regulates dissociation from intermediate filaments during mitosis. Isoform 2 is phosphorylated on Ser-21 and Tyr-26. Widely expressed with highest expression in skeletal muscle and lowest in thymus.

The protein resides in the cytoplasm. It is found in the cytoskeleton. The protein localises to the cell junction. Its subcellular location is the hemidesmosome. It localises to the cell projection. The protein resides in the podosome. Its function is as follows. Interlinks intermediate filaments with microtubules and microfilaments and anchors intermediate filaments to desmosomes or hemidesmosomes. May be involved not only in the cross-linking and stabilization of cytoskeletal intermediate filaments network, but also in the regulation of their dynamics. This is Plectin (Plec) from Rattus norvegicus (Rat).